Consider the following 371-residue polypeptide: 4-hydroxy-3-methylbut-2-en-1-yl diphosphate synthase (flavodoxin) (371 aa).

[4Fe-4S] cluster is bound by residues C268, C271, C303, and E310.

Belongs to the IspG family. [4Fe-4S] cluster serves as cofactor.

It catalyses the reaction (2E)-4-hydroxy-3-methylbut-2-enyl diphosphate + oxidized [flavodoxin] + H2O + 2 H(+) = 2-C-methyl-D-erythritol 2,4-cyclic diphosphate + reduced [flavodoxin]. It functions in the pathway isoprenoid biosynthesis; isopentenyl diphosphate biosynthesis via DXP pathway; isopentenyl diphosphate from 1-deoxy-D-xylulose 5-phosphate: step 5/6. Functionally, converts 2C-methyl-D-erythritol 2,4-cyclodiphosphate (ME-2,4cPP) into 1-hydroxy-2-methyl-2-(E)-butenyl 4-diphosphate. The protein is 4-hydroxy-3-methylbut-2-en-1-yl diphosphate synthase (flavodoxin) of Macrococcus caseolyticus (strain JCSC5402) (Macrococcoides caseolyticum).